Consider the following 299-residue polypeptide: Somaliensene A/B synthase (299 aa).

The next 7 membrane-spanning stretches (helical) occupy residues 32–49 (WTTL…AVHT), 56–72 (TAVA…LFVY), 110–132 (IAVR…ALLW), 153–171 (LYAG…EIVA), 177–194 (AWRW…LMSV), 222–241 (VFLC…FLMA), and 247–269 (WWIV…RVVL).

This sequence belongs to the UbiA prenyltransferase family. Mg(2+) is required as a cofactor.

It localises to the cell membrane. It catalyses the reaction (2E,6E,10E,14E)-geranylfarnesyl diphosphate = somaliensene A + diphosphate. The catalysed reaction is (2E,6E,10E,14E)-geranylfarnesyl diphosphate = (-)-somaliensene B + diphosphate. It functions in the pathway secondary metabolite biosynthesis; terpenoid biosynthesis. In terms of biological role, sesterterpene cyclase, which converts geranylfarnesyl diphosphate (GFPP) into the terpenes somaliensene A and somaliensene B. The polypeptide is Somaliensene A/B synthase (Streptomyces somaliensis (strain ATCC 33201 / DSM 40738 / JCM 12659 / KCTC 9044 / NCTC 11332 / NRRL B-12077 / IP 733)).